Consider the following 95-residue polypeptide: MSLRPLQDRILVERVQETEKTKGGIIIPDTAKEKPAEGKVVASGNGRVGEDGKLIPMDLKVGDTILFSKYGGTEVKIDGTDYLIMRQDDVLGVIE.

The protein belongs to the GroES chaperonin family. As to quaternary structure, heptamer of 7 subunits arranged in a ring. Interacts with the chaperonin GroEL.

It localises to the cytoplasm. Functionally, together with the chaperonin GroEL, plays an essential role in assisting protein folding. The GroEL-GroES system forms a nano-cage that allows encapsulation of the non-native substrate proteins and provides a physical environment optimized to promote and accelerate protein folding. GroES binds to the apical surface of the GroEL ring, thereby capping the opening of the GroEL channel. This chain is Co-chaperonin GroES, found in Desulforapulum autotrophicum (strain ATCC 43914 / DSM 3382 / VKM B-1955 / HRM2) (Desulfobacterium autotrophicum).